The sequence spans 353 residues: Phosphoribosylformylglycinamidine cyclo-ligase (353 aa).

This sequence belongs to the AIR synthase family.

The protein localises to the cytoplasm. It carries out the reaction 2-formamido-N(1)-(5-O-phospho-beta-D-ribosyl)acetamidine + ATP = 5-amino-1-(5-phospho-beta-D-ribosyl)imidazole + ADP + phosphate + H(+). It participates in purine metabolism; IMP biosynthesis via de novo pathway; 5-amino-1-(5-phospho-D-ribosyl)imidazole from N(2)-formyl-N(1)-(5-phospho-D-ribosyl)glycinamide: step 2/2. The polypeptide is Phosphoribosylformylglycinamidine cyclo-ligase (Dinoroseobacter shibae (strain DSM 16493 / NCIMB 14021 / DFL 12)).